The sequence spans 132 residues: Small ribosomal subunit protein uS8 (132 aa).

This sequence belongs to the universal ribosomal protein uS8 family. In terms of assembly, part of the 30S ribosomal subunit. Contacts proteins S5 and S12.

In terms of biological role, one of the primary rRNA binding proteins, it binds directly to 16S rRNA central domain where it helps coordinate assembly of the platform of the 30S subunit. The protein is Small ribosomal subunit protein uS8 of Streptococcus mutans serotype c (strain ATCC 700610 / UA159).